We begin with the raw amino-acid sequence, 544 residues long: Lysophosphatidylcholine acyltransferase 2 (544 aa).

Residues 1 to 58 (MNRCAEAAAVAATVPGSGVGDAGLRPPMVPRQASFFPPPVPNPFVQQTTISASRRLQM) lie on the Cytoplasmic side of the membrane. The chain crosses the membrane as a helical; Signal-anchor for type II membrane protein span at residues 59–79 (FLLGIILLPVRALLVGIILLL). Residues 80 to 544 (AWPFAVISTA…EEGTSDKKVD (465 aa)) are Lumenal-facing. The short motif at 146–151 (HSTFFD) is the HXXXXD motif element. Residues 220 to 223 (EGTC) carry the EGTC motif motif. EF-hand domains are found at residues 391–426 (PVSDVLRQLFALFDRNNDGSIDFREYVIGLAVLCNP) and 428–463 (NTEEIIQVAFKLFDVDEDGYITEEEFCTILQASLGV). The Ca(2+) site is built by aspartate 404, asparagine 406, aspartate 408, serine 410, glutamate 415, aspartate 441, aspartate 443, aspartate 445, tyrosine 447, and glutamate 452. Residues 520 to 532 (TAPSVASNKVSPE) show a composition bias toward polar residues. The disordered stretch occupies residues 520 to 544 (TAPSVASNKVSPESQEEGTSDKKVD).

The protein belongs to the 1-acyl-sn-glycerol-3-phosphate acyltransferase family. In terms of tissue distribution, highest expression is found in resident macrophages and casein-induced neutrophils followed by skin, colon, spleen and thioglycollate-induced macrophages. Detected in erythroleukemic cells but not in reticulocytes.

It localises to the endoplasmic reticulum membrane. The protein resides in the golgi apparatus membrane. It is found in the cell membrane. Its subcellular location is the lipid droplet. It catalyses the reaction a 1-acyl-sn-glycero-3-phosphocholine + an acyl-CoA = a 1,2-diacyl-sn-glycero-3-phosphocholine + CoA. It carries out the reaction a 1-O-alkyl-sn-glycero-3-phosphocholine + acetyl-CoA = a 1-O-alkyl-2-acetyl-sn-glycero-3-phosphocholine + CoA. The catalysed reaction is a 1-acyl-sn-glycero-3-phosphate + an acyl-CoA = a 1,2-diacyl-sn-glycero-3-phosphate + CoA. The enzyme catalyses a 1-O-(1Z-alkenyl)-sn-glycero-3-phosphocholine + an acyl-CoA = a 1-O-(1Z-alkenyl)-2-acyl-sn-glycero-3-phosphocholine + CoA. It catalyses the reaction 1-O-octadecyl-sn-glycero-3-phosphocholine + acetyl-CoA = 1-O-octadecyl-2-acetyl-sn-glycero-3-phosphocholine + CoA. It carries out the reaction 1-hexadecanoyl-sn-glycero-3-phosphocholine + acetyl-CoA = 1-hexadecanoyl-2-acetyl-sn-glycero-3-phosphocholine + CoA. The catalysed reaction is 1-octadecanoyl-sn-glycero-3-phosphocholine + acetyl-CoA = 1-octadecanoyl-2-acetyl-sn-glycero-3-phosphocholine + CoA. The enzyme catalyses a 1-O-(1Z-alkenyl)-sn-glycero-3-phosphocholine + acetyl-CoA = 1-O-(1Z)-alkenyl-2-acetyl-sn-glycero-3-phosphocholine + CoA. It catalyses the reaction 1-O-hexadecyl-sn-glycero-3-phosphocholine + acetyl-CoA = 1-O-hexadecyl-2-acetyl-sn-glycero-3-phosphocholine + CoA. It carries out the reaction 1-O-octadecyl-sn-glycero-3-phosphocholine + (5Z,8Z,11Z,14Z)-eicosatetraenoyl-CoA = 1-O-octadecyl-2-(5Z,8Z,11Z,14Z)-eicosatetraenoyl-sn-glycero-3-phosphocholine + CoA. The catalysed reaction is 1-hexadecanoyl-sn-glycero-3-phosphate + (9Z)-octadecenoyl-CoA = 1-hexadecanoyl-2-(9Z-octadecenoyl)-sn-glycero-3-phosphate + CoA. The enzyme catalyses 1-(9Z-octadecenoyl)-sn-glycero-3-phosphate + (9Z)-octadecenoyl-CoA = 1,2-di-(9Z-octadecenoyl)-sn-glycero-3-phosphate + CoA. It catalyses the reaction 1-(9Z-octadecenoyl)-sn-glycero-3-phosphate + hexadecanoyl-CoA = 1-(9Z)-octadecenoyl-2-hexadecanoyl-sn-glycero-3-phosphate + CoA. It carries out the reaction 1-heptadecanoyl-sn-glycero-3-phosphate + (9Z)-octadecenoyl-CoA = 1-heptadecanoyl-2-(9Z)-octadecenoyl-sn-glycero-3-phosphate + CoA. The catalysed reaction is 1-octadecanoyl-sn-glycero-3-phosphate + (9Z)-octadecenoyl-CoA = 1-octadecanoyl-2-(9Z-octadecenoyl)-sn-glycero-3-phosphate + CoA. The enzyme catalyses heptadecanoyl-CoA + 1-(9Z-octadecenoyl)-sn-glycero-3-phosphate = 1-(9Z)-octadecenoyl-2-heptadecanoyl-sn-glycero-3-phosphate + CoA. It catalyses the reaction 1-(9Z-octadecenoyl)-sn-glycero-3-phosphate + (9Z,12Z)-octadecadienoyl-CoA = 1-(9Z)-octadecenoyl-2-(9Z,12Z)-octadecadienoyl-sn-glycero-3-phosphate + CoA. It carries out the reaction 1-(9Z-octadecenoyl)-sn-glycero-3-phosphate + tetradecanoyl-CoA = 1-(9Z)-octadecenoyl-2-tetradecanoyl-sn-glycero-3-phosphate + CoA. The catalysed reaction is pentadecanoyl-CoA + 1-(9Z-octadecenoyl)-sn-glycero-3-phosphate = 1-(9Z)-octadecenoyl-2-pentadecanoyl-sn-glycero-3-phosphate + CoA. The enzyme catalyses nonadecanoyl-CoA + 1-(9Z-octadecenoyl)-sn-glycero-3-phosphate = 1-(9Z)-octadecenoyl-2-nonadecanoyl-sn-glycero-3-phosphate + CoA. It catalyses the reaction 1-hexadecanoyl-sn-glycero-3-phosphocholine + (9Z)-octadecenoyl-CoA = 1-hexadecanoyl-2-(9Z-octadecenoyl)-sn-glycero-3-phosphocholine + CoA. The protein operates within lipid metabolism; phospholipid metabolism. Its activity is regulated as follows. Acetyltransferase activity is increased following acute inflammatory stimulation by lipopolysaccharide (LPS). Acyltransferase activity is unchanged. Functionally, exhibits both acyltransferase and acetyltransferase activities. Activity is calcium-dependent. Catalyzes the conversion of lysophosphatidylcholine (1-acyl-sn-glycero-3-phosphocholine or LPC) into phosphatidylcholine (1,2-diacyl-sn-glycero-3-phosphocholine or PC). Catalyzes the conversion 1-acyl-sn-glycerol-3-phosphate (lysophosphatidic acid or LPA) into 1,2-diacyl-sn-glycerol-3-phosphate (phosphatidic acid or PA) by incorporating an acyl moiety at the sn-2 position of the glycerol backbone. Involved in platelet-activating factor (PAF) biosynthesis by catalyzing the conversion of the PAF precursor, 1-O-alkyl-sn-glycero-3-phosphocholine (lyso-PAF) into 1-O-alkyl-2-acetyl-sn-glycero-3-phosphocholine (PAF). Also converts lyso-PAF to 1-O-alkyl-2-acyl-sn-glycero-3-phosphocholine (PC), a major component of cell membranes and a PAF precursor. Under resting conditions, acyltransferase activity is preferred. Upon acute inflammatory stimulus, acetyltransferase activity is enhanced and PAF synthesis increases. Involved in the regulation of lipid droplet number and size. The protein is Lysophosphatidylcholine acyltransferase 2 (Lpcat2) of Mus musculus (Mouse).